Here is a 120-residue protein sequence, read N- to C-terminus: Large ribosomal subunit protein uL18 (120 aa).

This sequence belongs to the universal ribosomal protein uL18 family. Part of the 50S ribosomal subunit; part of the 5S rRNA/L5/L18/L25 subcomplex. Contacts the 5S and 23S rRNAs.

In terms of biological role, this is one of the proteins that bind and probably mediate the attachment of the 5S RNA into the large ribosomal subunit, where it forms part of the central protuberance. The protein is Large ribosomal subunit protein uL18 of Picosynechococcus sp. (strain ATCC 27264 / PCC 7002 / PR-6) (Agmenellum quadruplicatum).